Consider the following 444-residue polypeptide: MNHSRSHTLFVQAQTRIPGGVNSPVRAFRSVGGEPFFVARADGPYLFDVDGHRYIDYVGSWGPMIVGHNHPAVREAVQVAISNGLSYGAPCAAEVTMAETIARLVPSCDMVRMVNSGTEATLSAIRLARGATGRNHIVKFEGCYHGHGDSFLVKGGSGMLTLGMPSSPGVPAELSKLTITLTYNDFDAATALFEEMGHHIAAVIVEPVIGNANCIPPRPGYLQHLRTLCTQYAVLLIFDEVMTGFRVALGGAQALYGVTPDLTTFGKIIGGGMPVGAYGGCRDLMQHIAPAGPIYQAGTLSGNPVAMAAGLAMLELIQAPDFYTHLSNAAAALCTGLQQAASQAGIAMTTQQIGGMFGLFFTDQQVETYAQATACNTDRFNRFFHAMLQRGVFFAPSAYEAGFISSAHSPDIIEATLEAARAAFQTIANEAAILSESEAPLKMP.

Lys267 carries the N6-(pyridoxal phosphate)lysine modification.

The protein belongs to the class-III pyridoxal-phosphate-dependent aminotransferase family. HemL subfamily. As to quaternary structure, homodimer. Requires pyridoxal 5'-phosphate as cofactor.

It localises to the cytoplasm. It catalyses the reaction (S)-4-amino-5-oxopentanoate = 5-aminolevulinate. It participates in porphyrin-containing compound metabolism; protoporphyrin-IX biosynthesis; 5-aminolevulinate from L-glutamyl-tRNA(Glu): step 2/2. The chain is Glutamate-1-semialdehyde 2,1-aminomutase from Xylella fastidiosa (strain 9a5c).